A 30-amino-acid chain; its full sequence is Photosystem I reaction center subunit XII (30 aa).

Residues 6–26 (VFTILAIALVPAVMAALLGSA) form a helical membrane-spanning segment.

The protein belongs to the PsaM family.

The protein localises to the cellular thylakoid membrane. The protein is Photosystem I reaction center subunit XII of Synechococcus sp. (strain JA-3-3Ab) (Cyanobacteria bacterium Yellowstone A-Prime).